The primary structure comprises 915 residues: Protein SLFN14 (915 aa).

Basic residues predominate over residues 157-167 (AAQRGRRRLHP). The disordered stretch occupies residues 157-176 (AAQRGRRRLHPPRASNSNLQ). The interval 204 to 389 (ESTHVEFKRF…KVLEFKGALQ (186 aa)) is required for endoribonuclease activity. Residues 390-569 (RHLFPVTQKT…QLGCEFFNLL (180 aa)) are required for ribosome binding.

In terms of assembly, associates with ribosomes in an ATP-independent manner. It depends on Mg(2+) as a cofactor. Mn(2+) is required as a cofactor. In terms of tissue distribution, detected in reticulocytes (at protein level).

The protein resides in the nucleus. Its function is as follows. Shows no ribosome-associated and endoribonuclease activities. In terms of biological role, displays polysome-associated endoribonuclease activity towards mRNAs and rRNAs. May play a role in RNA surveillance pathways by recognizing stalled ribosomes and triggering endonucleolytic cleavage of aberrant mRNAs. Cleaves RNAs in a magnesium-, manganese-dependent and ATP-independent manner. Involved in correct maturation of megakaryocytes and especially important for proplatelet extension. In Oryctolagus cuniculus (Rabbit), this protein is Protein SLFN14.